We begin with the raw amino-acid sequence, 174 residues long: Beta-lactoglobulin (174 aa).

An N-terminal signal peptide occupies residues 1–18; it reads MKFLLLTVGLALIGAIQA. Cystine bridges form between C79–C172 and C122–C134.

It belongs to the calycin superfamily. Lipocalin family. As to quaternary structure, monomer.

It localises to the secreted. In terms of biological role, lactoglobulin is the primary component of whey, it binds retinol and is probably involved in the transport of that molecule. The sequence is that of Beta-lactoglobulin (LGB) from Notamacropus eugenii (Tammar wallaby).